Here is a 269-residue protein sequence, read N- to C-terminus: Centromere protein K (269 aa).

Residues 1-10 are compositionally biased toward acidic residues; the sequence is MNQEDLDPDS. The tract at residues 1–20 is disordered; the sequence is MNQEDLDPDSTTDVGDVTNT. Coiled-coil stretches lie at residues 22–42 and 98–151; these read EELI…QNKL and QKLR…NKVE.

Belongs to the CENP-K/MCM22 family. Component of the CENPA-CAD complex, composed of CENPI, CENPK, CENPL, CENPO, CENPP, CENPQ, CENPR and CENPS. The CENPA-CAD complex interacts with the CENPA-NAC complex, at least composed of CENPA, CENPC, CENPH, CENPM, CENPN, CENPT and CENPU. Interacts directly with CENPH. Detected in several fetal organs with highest levels in fetal liver. In adults, it is weakly expressed in lung and placenta.

It is found in the nucleus. It localises to the chromosome. Its subcellular location is the centromere. The protein resides in the kinetochore. Functionally, component of the CENPA-CAD (nucleosome distal) complex, a complex recruited to centromeres which is involved in assembly of kinetochore proteins, mitotic progression and chromosome segregation. May be involved in incorporation of newly synthesized CENPA into centromeres via its interaction with the CENPA-NAC complex. Acts in coordination with KNL1 to recruit the NDC80 complex to the outer kinetochore. This Homo sapiens (Human) protein is Centromere protein K (CENPK).